The following is a 460-amino-acid chain: Glucan endo-1,3-beta-D-glucosidase (460 aa).

Positions 1 to 26 (MAANVQTSSLLFLVFLLLQNFYSANS) are cleaved as a signal peptide. Catalysis depends on E123, which acts as the Proton donor. E268 serves as the catalytic Nucleophile. The segment at 352-371 (NTQNPTTPATPTPTPKAAGS) is disordered. The N-linked (GlcNAc...) asparagine glycan is linked to N355. C373 and C435 are oxidised to a cystine. N-linked (GlcNAc...) asparagine glycosylation occurs at N447.

Belongs to the glycosyl hydrolase 17 family. As to quaternary structure, homodimer. In terms of processing, glycosylated. Post-translationally, contains two additional disulfide bonds, but it is unclear if they are between the pairs Cys-392-Cys-398 and Cys-407-Cys-453 (PudMed:18096638) or between the pairs Cys-392-Cys-453 and Cys-398-Cys-407 (PudMed:12392450). In terms of tissue distribution, expressed only in pollen.

The protein localises to the secreted. It catalyses the reaction Hydrolysis of (1-&gt;3)-beta-D-glucosidic linkages in (1-&gt;3)-beta-D-glucans.. The sequence is that of Glucan endo-1,3-beta-D-glucosidase (OLE9) from Olea europaea (Common olive).